The chain runs to 407 residues: MSHRKFSAPRHGHLGFLPHKRSHRHRGKVKTWPRDDPSQPVHLTAFLGYKAGMTHTLREVHRPGLKISKREEVEAVTIVETPPLVVVGVVGYVATPRGLRSFKTIFAEHLSDECRRRFYKDWHKSKKKAFTKACKRWRDADGKKQLQKDFAAMKKYCKVIRVIVHTQMKLLPFRQKKAHIMEVQLNGGTVAEKVAWAQARLEKQVPVHSVFSQNEIIDVIAVTKGRGIKGVTSRWHTKKLPRKTHKGLRKVACIGAWHPARVGCSIARAGQKGYHHRTELNKKIYRIGRGLHMEDGKVVKNNASTSYDVTDKSITPLGGFPHYGEVNNDFVMLKGCIAGTKKRVITLRKSLLVHHSRQALENIELKFIDTTSKFGHGRFQTAQEKRAFMGPQKKHLEKEKPETSGDL.

Positions 1–31 are enriched in basic residues; it reads MSHRKFSAPRHGHLGFLPHKRSHRHRGKVKT. Disordered regions lie at residues 1–35 and 383–407; these read MSHRKFSAPRHGHLGFLPHKRSHRHRGKVKTWPRD and QEKRAFMGPQKKHLEKEKPETSGDL. The segment covering 394–407 has biased composition (basic and acidic residues); sequence KHLEKEKPETSGDL.

This sequence belongs to the universal ribosomal protein uL3 family. In terms of assembly, component of the large ribosomal subunit in striated muscle cells.

Functionally, heart- and skeletal muscle-specific component of the ribosome, which regulates muscle function. Component of the large ribosomal subunit in striated muscle cells: replaces the RPL3 paralog in the ribosome in these cells. The ribosome is a large ribonucleoprotein complex responsible for the synthesis of proteins in the cell. Inhibits myotube growth and muscle function. The chain is Large ribosomal subunit protein uL3-like (RPL3L) from Bos taurus (Bovine).